The primary structure comprises 470 residues: 3-isopropylmalate dehydratase large subunit (470 aa).

Positions 349, 410, and 413 each coordinate [4Fe-4S] cluster.

It belongs to the aconitase/IPM isomerase family. LeuC type 1 subfamily. Heterodimer of LeuC and LeuD. The cofactor is [4Fe-4S] cluster.

It catalyses the reaction (2R,3S)-3-isopropylmalate = (2S)-2-isopropylmalate. It participates in amino-acid biosynthesis; L-leucine biosynthesis; L-leucine from 3-methyl-2-oxobutanoate: step 2/4. Functionally, catalyzes the isomerization between 2-isopropylmalate and 3-isopropylmalate, via the formation of 2-isopropylmaleate. In Nitrosomonas europaea (strain ATCC 19718 / CIP 103999 / KCTC 2705 / NBRC 14298), this protein is 3-isopropylmalate dehydratase large subunit.